Here is a 1167-residue protein sequence, read N- to C-terminus: Putative structural protein VP3 (1167 aa).

This chain is Putative structural protein VP3 (S3), found in Fiji disease virus (isolate Sugarcane) (FDV).